Consider the following 331-residue polypeptide: XylDLEGF operon transcriptional activator 1 (331 aa).

Residues 214-315 (ERVVQFIEEN…GELPSDTLRR (102 aa)) enclose the HTH araC/xylS-type domain. 2 DNA-binding regions (H-T-H motif) span residues 231-252 (ERLA…EKHA) and 282-305 (VTEM…RSTF).

It is found in the cytoplasm. Regulatory protein of the TOL plasmid xyl operons. XylS activates the xylXYZLTEGFJQKIH operon required for the degradation of toluene, m-xylene and p-xylene. The sequence is that of XylDLEGF operon transcriptional activator 1 (xylS1) from Pseudomonas putida (Arthrobacter siderocapsulatus).